A 394-amino-acid polypeptide reads, in one-letter code: Probable tRNA sulfurtransferase (394 aa).

In terms of domain architecture, THUMP spans 61–168 (DETVATLSRI…PMINIYSEEI (108 aa)). ATP-binding positions include 185 to 186 (LL), 210 to 211 (YF), R267, G289, and Q298.

This sequence belongs to the ThiI family.

The protein resides in the cytoplasm. It catalyses the reaction [ThiI sulfur-carrier protein]-S-sulfanyl-L-cysteine + a uridine in tRNA + 2 reduced [2Fe-2S]-[ferredoxin] + ATP + H(+) = [ThiI sulfur-carrier protein]-L-cysteine + a 4-thiouridine in tRNA + 2 oxidized [2Fe-2S]-[ferredoxin] + AMP + diphosphate. The enzyme catalyses [ThiS sulfur-carrier protein]-C-terminal Gly-Gly-AMP + S-sulfanyl-L-cysteinyl-[cysteine desulfurase] + AH2 = [ThiS sulfur-carrier protein]-C-terminal-Gly-aminoethanethioate + L-cysteinyl-[cysteine desulfurase] + A + AMP + 2 H(+). It participates in cofactor biosynthesis; thiamine diphosphate biosynthesis. Catalyzes the ATP-dependent transfer of a sulfur to tRNA to produce 4-thiouridine in position 8 of tRNAs, which functions as a near-UV photosensor. Also catalyzes the transfer of sulfur to the sulfur carrier protein ThiS, forming ThiS-thiocarboxylate. This is a step in the synthesis of thiazole, in the thiamine biosynthesis pathway. The sulfur is donated as persulfide by IscS. The polypeptide is Probable tRNA sulfurtransferase (Agathobacter rectalis (strain ATCC 33656 / DSM 3377 / JCM 17463 / KCTC 5835 / VPI 0990) (Eubacterium rectale)).